The sequence spans 484 residues: Deoxyribodipyrimidine photo-lyase (484 aa).

In terms of domain architecture, Photolyase/cryptochrome alpha/beta spans 3-132; that stretch reads APILFWHRRD…RAVQLWDQLL (130 aa). Coenzyme F420-(gamma-Glu)n is bound by residues 36-38, arginine 51, and 101-109; these read CLD and DIEPYGRDR. Positions 141 to 148 are DNA-binding; that stretch reads GSGNPYSV. An FAD-binding site is contributed by tyrosine 228. Arginine 232 lines the DNA pocket. 240 to 247 serves as a coordination point for FAD; it reads TSGLSPAL. Coenzyme F420-(gamma-Glu)n is bound at residue lysine 248. Interaction with DNA regions lie at residues 283–290 and 349–350; these read ELAWREFY and NR. FAD-binding positions include 346–352, 380–382, and asparagine 386; these read WMHNRCW and DGD. DNA is bound by residues glutamine 411 and lysine 472.

Belongs to the DNA photolyase class-1 family. In terms of assembly, monomer. FAD serves as cofactor. It depends on coenzyme F420-(gamma-Glu)n as a cofactor.

The enzyme catalyses cyclobutadipyrimidine (in DNA) = 2 pyrimidine residues (in DNA).. Its function is as follows. Involved in repair of UV radiation-induced DNA damage. Catalyzes the light-dependent monomerization (300-600 nm) of cyclobutyl pyrimidine dimers (in cis-syn configuration), which are formed between adjacent bases on the same DNA strand upon exposure to ultraviolet radiation. The protein is Deoxyribodipyrimidine photo-lyase (phr) of Synechococcus sp. (strain ATCC 27144 / PCC 6301 / SAUG 1402/1) (Anacystis nidulans).